We begin with the raw amino-acid sequence, 362 residues long: Aminomethyltransferase (362 aa).

It belongs to the GcvT family. In terms of assembly, the glycine cleavage system is composed of four proteins: P, T, L and H.

The enzyme catalyses N(6)-[(R)-S(8)-aminomethyldihydrolipoyl]-L-lysyl-[protein] + (6S)-5,6,7,8-tetrahydrofolate = N(6)-[(R)-dihydrolipoyl]-L-lysyl-[protein] + (6R)-5,10-methylene-5,6,7,8-tetrahydrofolate + NH4(+). Its function is as follows. The glycine cleavage system catalyzes the degradation of glycine. This is Aminomethyltransferase from Listeria monocytogenes serotype 4a (strain HCC23).